The following is a 398-amino-acid chain: Protein CDKN2AIP homolog A (398 aa).

The region spanning 19-124 (LELVHGECES…KVKKRGISSS (106 aa)) is the XRN2-binding (XTBD) domain. A disordered region spans residues 118-245 (KRGISSSNEG…SDNALKPTRR (128 aa)). The span at 131–147 (EPCKKQKSSDHGERESS) shows a compositional bias: basic and acidic residues. 3 stretches are compositionally biased toward polar residues: residues 154–163 (SDGNVPSTSL), 189–199 (RRSLPVSNAKS), and 226–238 (QTSMKGPAQSSDN).

This sequence belongs to the CARF family.

The protein localises to the nucleus. Its subcellular location is the nucleoplasm. May regulate DNA damage response and cell proliferation. The protein is Protein CDKN2AIP homolog A (cdkn2aip-a) of Xenopus laevis (African clawed frog).